The sequence spans 540 residues: GMP synthase [glutamine-hydrolyzing] (540 aa).

A Glutamine amidotransferase type-1 domain is found at 29-222 (KILIVDFGSQ…VRKVAGLTGD (194 aa)). Catalysis depends on C106, which acts as the Nucleophile. Residues H196 and E198 contribute to the active site. One can recognise a GMPS ATP-PPase domain in the interval 223 to 415 (WTMRAFREEA…LGLPEIFVGR (193 aa)). 250 to 256 (SGGVDSA) serves as a coordination point for ATP.

As to quaternary structure, homodimer.

The catalysed reaction is XMP + L-glutamine + ATP + H2O = GMP + L-glutamate + AMP + diphosphate + 2 H(+). The protein operates within purine metabolism; GMP biosynthesis; GMP from XMP (L-Gln route): step 1/1. In terms of biological role, catalyzes the synthesis of GMP from XMP. This is GMP synthase [glutamine-hydrolyzing] from Rhodopseudomonas palustris (strain HaA2).